We begin with the raw amino-acid sequence, 257 residues long: L-aspartate dehydrogenase (257 aa).

Residues Ala-124 and Asn-180 each contribute to the NAD(+) site. Residue His-208 is part of the active site.

The protein belongs to the L-aspartate dehydrogenase family.

The catalysed reaction is L-aspartate + NADP(+) + H2O = oxaloacetate + NH4(+) + NADPH + H(+). The enzyme catalyses L-aspartate + NAD(+) + H2O = oxaloacetate + NH4(+) + NADH + H(+). It participates in cofactor biosynthesis; NAD(+) biosynthesis; iminoaspartate from L-aspartate (dehydrogenase route): step 1/1. Specifically catalyzes the NAD or NADP-dependent dehydrogenation of L-aspartate to iminoaspartate. The protein is L-aspartate dehydrogenase of Methanothermobacter thermautotrophicus (strain ATCC 29096 / DSM 1053 / JCM 10044 / NBRC 100330 / Delta H) (Methanobacterium thermoautotrophicum).